A 591-amino-acid polypeptide reads, in one-letter code: MESTLKEMRDGASVLDMDPKSTVGGGVEDVYGEDRATEDQLVTPWTISVASGYTLLRDPHHNKGLAFTEKERDAHYLRGLLPPTTISQQLQEKKLMNTIRQYQLPLQKYTAMMELEERNERLFYKLLIDNVEELLPVVYTPTVGEACQKYGSIFKRPQGLYISLKEKGKVLDVLKNWPQKSIQVIVVTDGERILGLGDLGCQGIGIPVGKLSLYTALGGVRPSACLPVTIDVGTNNEQLLKDEFYIGLRQRRATGQEYSELLHEFMTAVKQNYGEKVLIQFEDFANHNAFDLLAKYGTTHLVFNDDIQGTAAVVLAGLISALKLLGGSLADHTFLFLGAGEAGTGIAELIALEMSRRSKTPLEETRKKIWLTDSKGLIVSSRKESLQHFKKPWAHEHEPVKGLLEVVKAIKPIVLIGTSGVGKTFTKEVIEAMASFNEKPLILALSNPTSQSECTAQEAYTWTKGKAIFASGSPFDPVEYEGKVFVPGQSNNAYIFPGLGLGLVISGAIRVHDDMLLAAAEALAGQIKEEYLAKGLIYPPLSNIRKISVQIAANVAAKAYELGLATRLPRPENLVKHAESCMYSPAYRYYR.

The span at 1-10 (MESTLKEMRD) shows a compositional bias: basic and acidic residues. The segment at 1-26 (MESTLKEMRDGASVLDMDPKSTVGGG) is disordered. Residue Tyr-139 is the Proton donor of the active site. Residue Arg-192 participates in NAD(+) binding. The Proton acceptor role is filled by Lys-210. Residues Glu-282, Asp-283, and Asp-306 each coordinate a divalent metal cation. An NAD(+)-binding site is contributed by Asp-306. 335–351 (LFLGAGEAGTGIAELIA) serves as a coordination point for NADP(+). Residue Asn-447 participates in NAD(+) binding.

It belongs to the malic enzymes family. Homotetramer. Mg(2+) serves as cofactor. It depends on Mn(2+) as a cofactor. As to expression, mRNA found twofold higher in leaves and stems than in roots.

It is found in the cytoplasm. The catalysed reaction is (S)-malate + NADP(+) = pyruvate + CO2 + NADPH. It catalyses the reaction oxaloacetate + H(+) = pyruvate + CO2. The chain is NADP-dependent malic enzyme from Populus trichocarpa (Western balsam poplar).